The following is a 1335-amino-acid chain: Bifunctional autolysin (1335 aa).

The first 29 residues, 1-29 (MAKKFNYKLPSMVALTLFGTAFTAHQANA), serve as a signal peptide directing secretion. Disordered regions lie at residues 51–88 (QAEK…QSTT), 100–262 (NEIS…KYKE), and 514–535 (WGTT…NNKL). 5 stretches are compositionally biased toward polar residues: residues 58-88 (EVTQ…QSTT), 100-127 (NEIS…VTKN), 143-155 (TDTN…QSVA), 176-223 (TASQ…NASG), and 244-258 (SLNN…TTSY). An N-acetylmuramoyl-L-alanine amidase region spans residues 303-863 (VSSQKTSSLP…LSTQSTPAPK (561 aa)). Residues 515–531 (GTTSTKPSQPSKPSGGT) show a composition bias toward low complexity. 7 consecutive GW domains span residues 533 to 610 (NKLT…YNTA), 612 to 686 (APVK…TASK), 700 to 774 (TVTN…YNTA), 776 to 850 (SPVK…APSK), 868 to 943 (STQT…TQNI), 945 to 1020 (KQTQ…QNST), and 1023 to 1096 (QSTP…KEKI). The tract at residues 864-1335 (QVKPSTQTVN…GKYFEIPIYK (472 aa)) is endo-beta-N-acetylglucosaminidase.

The protein in the N-terminal section; belongs to the N-acetylmuramoyl-L-alanine amidase 2 family. This sequence in the C-terminal section; belongs to the glycosyl hydrolase 73 family. Oligomer; forms a ring structure at the cell surface which is important for efficient partitioning of daughter cells after cell division. In terms of processing, undergoes proteolytic processing to generate the two extracellular lytic enzymes, probably at the septal region on the cell surface.

It localises to the secreted. It catalyses the reaction Hydrolyzes the link between N-acetylmuramoyl residues and L-amino acid residues in certain cell-wall glycopeptides.. The enzyme catalyses an N(4)-(oligosaccharide-(1-&gt;3)-[oligosaccharide-(1-&gt;6)]-beta-D-Man-(1-&gt;4)-beta-D-GlcNAc-(1-&gt;4)-alpha-D-GlcNAc)-L-asparaginyl-[protein] + H2O = an oligosaccharide-(1-&gt;3)-[oligosaccharide-(1-&gt;6)]-beta-D-Man-(1-&gt;4)-D-GlcNAc + N(4)-(N-acetyl-beta-D-glucosaminyl)-L-asparaginyl-[protein]. Functionally, endohydrolysis of the di-N-acetylchitobiosyl unit in high-mannose glycopeptides and glycoproteins containing the -[(Man)5(GlcNAc)2]-Asn structure. One N-acetyl-D-glucosamine residue remains attached to the protein; the rest of the oligosaccharide is released intact. Cleaves the peptidoglycan connecting the daughter cells at the end of the cell division cycle, resulting in the separation of the two newly divided cells. Acts as an autolysin in penicillin-induced lysis. The chain is Bifunctional autolysin (atl) from Staphylococcus epidermidis (strain ATCC 12228 / FDA PCI 1200).